The chain runs to 382 residues: UDP-4-amino-4-deoxy-L-arabinose--oxoglutarate aminotransferase (382 aa).

Residue lysine 182 is modified to N6-(pyridoxal phosphate)lysine.

It belongs to the DegT/DnrJ/EryC1 family. ArnB subfamily. As to quaternary structure, homodimer. Pyridoxal 5'-phosphate serves as cofactor.

The catalysed reaction is UDP-4-amino-4-deoxy-beta-L-arabinose + 2-oxoglutarate = UDP-beta-L-threo-pentopyranos-4-ulose + L-glutamate. It participates in nucleotide-sugar biosynthesis; UDP-4-deoxy-4-formamido-beta-L-arabinose biosynthesis; UDP-4-deoxy-4-formamido-beta-L-arabinose from UDP-alpha-D-glucuronate: step 2/3. The protein operates within bacterial outer membrane biogenesis; lipopolysaccharide biosynthesis. Catalyzes the conversion of UDP-4-keto-arabinose (UDP-Ara4O) to UDP-4-amino-4-deoxy-L-arabinose (UDP-L-Ara4N). The modified arabinose is attached to lipid A and is required for resistance to polymyxin and cationic antimicrobial peptides. The polypeptide is UDP-4-amino-4-deoxy-L-arabinose--oxoglutarate aminotransferase (Yersinia enterocolitica serotype O:8 / biotype 1B (strain NCTC 13174 / 8081)).